Consider the following 424-residue polypeptide: Adenylosuccinate synthetase 2 (424 aa).

GTP-binding positions include 11–17 (GDEGKGK) and 39–41 (GHT). Catalysis depends on Asp-12, which acts as the Proton acceptor. Positions 12 and 39 each coordinate Mg(2+). Residues 12–15 (DEGK), 37–40 (NAGH), Thr-127, Arg-141, Gln-223, Thr-238, and Arg-302 contribute to the IMP site. His-40 functions as the Proton donor in the catalytic mechanism. 298–304 (TTTGRGR) is a binding site for substrate. GTP is bound by residues Arg-304, 330–332 (KLD), and 412–414 (SVG).

The protein belongs to the adenylosuccinate synthetase family. As to quaternary structure, homodimer. It depends on Mg(2+) as a cofactor.

The protein resides in the cytoplasm. The catalysed reaction is IMP + L-aspartate + GTP = N(6)-(1,2-dicarboxyethyl)-AMP + GDP + phosphate + 2 H(+). It participates in purine metabolism; AMP biosynthesis via de novo pathway; AMP from IMP: step 1/2. Its function is as follows. Plays an important role in the de novo pathway of purine nucleotide biosynthesis. Catalyzes the first committed step in the biosynthesis of AMP from IMP. The chain is Adenylosuccinate synthetase 2 from Methanosarcina acetivorans (strain ATCC 35395 / DSM 2834 / JCM 12185 / C2A).